The following is a 378-amino-acid chain: Trans-enoyl reductase poxP (378 aa).

Residue 62-65 (CDWK) coordinates NADP(+). Position 151–158 (151–158 (SVFATLWI)) interacts with substrate. Residues 187–190 (STST), 210–213 (SPHN), Y228, and 275–276 (LE) contribute to the NADP(+) site. 295 to 299 (GLAAS) provides a ligand contact to substrate. 364 to 365 (TS) contacts NADP(+).

It belongs to the zinc-containing alcohol dehydrogenase family. As to quaternary structure, monomer.

It participates in secondary metabolite biosynthesis. Functionally, trans-enoyl reductase; part of the gene cluster that mediates the biosynthesis of oxaleimides, cytotoxic compounds containing an unusual disubstituted succinimide moiety. The first step of the pathway is provided by the HR-PKS poxF that serves in a new mode of collaborative biosynthesis with the PKS-NRPS poxE, by providing the olefin containing amino acid substrate via the synthesis of an ACP-bound dec-4-enoate. The cytochrome P450 monooxygenase poxM-catalyzed oxidation at the alpha-position creates the enzyme-bound 2-hydroxydec-4-enoyl-ACP thioester, which may be prone to spontaneous hydrolysis to yield 2-hydroxydec-4-enoic acid due to increased electrophilicity of the carbonyl. 2-hydroxydec-4-enoic acid can then be further oxidized by poxM to yield the alpha-ketoacid 2-oxodec-4-enoicacid, which is reductively aminated by the aminotransferase poxL to yield (S,E)-2-aminodec-4-enoic acid. The Hybrid PKS-NRPS synthetase poxE then performs condensation between the octaketide product of its PKS modules and the amino group of (S,E)-2-aminodec-4-enoic acid which is activated and incorporated by the adenylation domain. The resulting aminoacyl product can be cyclized by the Diels-Alderase PoxQ and reductively released by the reductive (R) domain of poxE to yield an aldehyde intermediate. The released aldehyde is then substrate for a Knoevenagel condensation by the hydrolyase poxO followed by an oxidation at the 5-position of the pyrrolidone ring. The presence of the olefin from the amino acid building block allows for migration of the substituted allyl group to occur. This allylic transposition reaction takes place in a conjugate addition, semipinacol-like fashion to yield a succinimide intermediate. Iterative two-electron oxidations of the C7 methyl of the succinimide intermediate to the carboxylic acid can be catalyzed by one of two remaining cytochrome P450 monooxygenasess poxC or poxD to yield oxaleimide A. Subsequent oxidation yields the maleimide scaffold oxaleimide I. Both oxaleimide A and oxaleimide I can undergo oxidative modifications in the decalin ring to yield the series of products oxaleimides B to H. The sequence is that of Trans-enoyl reductase poxP from Penicillium oxalicum.